Consider the following 445-residue polypeptide: Hydroxycinnamoyl-CoA:5-hydroxyanthranilate N-hydroxycinnamoyltransferase HHT4 (445 aa).

This sequence belongs to the plant acyltransferase family.

It catalyses the reaction 5-hydroxyanthranilate + (E)-4-coumaroyl-CoA = avenanthramide A + CoA. The catalysed reaction is 5-hydroxyanthranilate + (E)-caffeoyl-CoA = avenanthramide C + CoA. Its function is as follows. Involved in the biosynthesis of avenanthramide phytoalexins, which are phenolic alkaloids found mainly in oats. Catalyzes the N-acylation of 5-hydroxyanthranilate with 4-coumaroyl-CoA or caffeoyl-CoA as acyl donors, forming avenanthramide A and avenanthramide C, respectively. Does not accept feruloyl-CoA as a substrate. This is Hydroxycinnamoyl-CoA:5-hydroxyanthranilate N-hydroxycinnamoyltransferase HHT4 from Avena sativa (Oat).